The following is a 483-amino-acid chain: UDP-glucosyl transferase 73B2 (483 aa).

H22 functions as the Proton acceptor in the catalytic mechanism. An an anthocyanidin-binding site is contributed by H22. D133 serves as the catalytic Charge relay. The UDP-alpha-D-glucose site is built by A355, Q357, H372, W375, N376, S377, and E380. A395 contributes to the an anthocyanidin binding site. Residues E396 and Q397 each coordinate UDP-alpha-D-glucose.

Belongs to the UDP-glycosyltransferase family. Expressed in roots and flowers.

The enzyme catalyses a 7-O-hydroxy-flavonol + UDP-alpha-D-glucose = a flavonol 7-O-beta-D-glucoside + UDP + H(+). It functions in the pathway secondary metabolite biosynthesis; flavonoid biosynthesis. Its function is as follows. Catalyzes the glycosylation of flavonoids from UDP-glucose. Uses a wide range of flavonoid substrates including flavonols (quercetin, kaempferol, isorhamnetin, 3-OH 7,2',4'-MeO-flavone), flavones (luteolin, apigenin), flavanones (naringenin, hesperetin), flavanonols (taxifolin), isoflavones (genistein, daidzein), flavonol glycosides (quercitrin, isoquercitrin, rutin), and chalcones (isoliquiritigenin). Specific for the C-7 position, with a 20-fold lower activity for the C-3 position. The chain is UDP-glucosyl transferase 73B2 (UGT73B2) from Arabidopsis thaliana (Mouse-ear cress).